A 154-amino-acid polypeptide reads, in one-letter code: 6,7-dimethyl-8-ribityllumazine synthase (154 aa).

Residues Phe26, Ala60–Glu62, and Cys84–Ile86 each bind 5-amino-6-(D-ribitylamino)uracil. Residue Glu89 to Thr90 participates in (2S)-2-hydroxy-3-oxobutyl phosphate binding. Residue His92 is the Proton donor of the active site. 5-amino-6-(D-ribitylamino)uracil is bound at residue Asn117. Arg131 contributes to the (2S)-2-hydroxy-3-oxobutyl phosphate binding site.

Belongs to the DMRL synthase family.

The enzyme catalyses (2S)-2-hydroxy-3-oxobutyl phosphate + 5-amino-6-(D-ribitylamino)uracil = 6,7-dimethyl-8-(1-D-ribityl)lumazine + phosphate + 2 H2O + H(+). The protein operates within cofactor biosynthesis; riboflavin biosynthesis; riboflavin from 2-hydroxy-3-oxobutyl phosphate and 5-amino-6-(D-ribitylamino)uracil: step 1/2. In terms of biological role, catalyzes the formation of 6,7-dimethyl-8-ribityllumazine by condensation of 5-amino-6-(D-ribitylamino)uracil with 3,4-dihydroxy-2-butanone 4-phosphate. This is the penultimate step in the biosynthesis of riboflavin. The polypeptide is 6,7-dimethyl-8-ribityllumazine synthase (Paracidovorax citrulli (strain AAC00-1) (Acidovorax citrulli)).